Consider the following 278-residue polypeptide: Purine nucleoside phosphorylase YlmD (278 aa).

Residues histidine 87, cysteine 132, and histidine 149 each contribute to the Zn(2+) site.

Belongs to the purine nucleoside phosphorylase YfiH/LACC1 family. As to quaternary structure, homodimer. The cofactor is Cu(2+). Zn(2+) is required as a cofactor.

It catalyses the reaction adenosine + phosphate = alpha-D-ribose 1-phosphate + adenine. It carries out the reaction S-methyl-5'-thioadenosine + phosphate = 5-(methylsulfanyl)-alpha-D-ribose 1-phosphate + adenine. The enzyme catalyses inosine + phosphate = alpha-D-ribose 1-phosphate + hypoxanthine. The catalysed reaction is adenosine + H2O + H(+) = inosine + NH4(+). Purine nucleoside enzyme that catalyzes the phosphorolysis of adenosine and inosine nucleosides, yielding D-ribose 1-phosphate and the respective free bases, adenine and hypoxanthine. Also catalyzes the phosphorolysis of S-methyl-5'-thioadenosine into adenine and S-methyl-5-thio-alpha-D-ribose 1-phosphate. Also has adenosine deaminase activity. This is Purine nucleoside phosphorylase YlmD (ylmD) from Bacillus subtilis (strain 168).